A 204-amino-acid chain; its full sequence is MTKRTESKYKINRRLGVNLWGRPKSPINKREYGPGQHGQRRKKPSDFGVQLMAKQKLRGYYGNISEKQFYKYYEEAVRRRGDTSENLIELLERRLDAVVYRMKFAITPFAARQFVSHGHVLVNGRRVNISSYQVRDGDVVEVREKSKQLAMVLDSVQSAERDVPEYIEVDHRAMKGTFARAPKLADVPYPVQMEPNLVVEFYSR.

A disordered region spans residues 21-45 (GRPKSPINKREYGPGQHGQRRKKPS). The region spanning 93–156 (RRLDAVVYRM…KQLAMVLDSV (64 aa)) is the S4 RNA-binding domain.

It belongs to the universal ribosomal protein uS4 family. In terms of assembly, part of the 30S ribosomal subunit. Contacts protein S5. The interaction surface between S4 and S5 is involved in control of translational fidelity.

Functionally, one of the primary rRNA binding proteins, it binds directly to 16S rRNA where it nucleates assembly of the body of the 30S subunit. With S5 and S12 plays an important role in translational accuracy. This is Small ribosomal subunit protein uS4 from Acidiphilium cryptum (strain JF-5).